The sequence spans 542 residues: Formate--tetrahydrofolate ligase (542 aa).

53–60 (TPAGEGKT) serves as a coordination point for ATP.

It belongs to the formate--tetrahydrofolate ligase family.

The enzyme catalyses (6S)-5,6,7,8-tetrahydrofolate + formate + ATP = (6R)-10-formyltetrahydrofolate + ADP + phosphate. The protein operates within one-carbon metabolism; tetrahydrofolate interconversion. This Thermotoga maritima (strain ATCC 43589 / DSM 3109 / JCM 10099 / NBRC 100826 / MSB8) protein is Formate--tetrahydrofolate ligase.